A 330-amino-acid polypeptide reads, in one-letter code: Ferredoxin--NADP reductase (330 aa).

Positions 35, 43, 48, 90, 123, 285, and 326 each coordinate FAD.

Belongs to the ferredoxin--NADP reductase type 2 family. Homodimer. The cofactor is FAD.

The catalysed reaction is 2 reduced [2Fe-2S]-[ferredoxin] + NADP(+) + H(+) = 2 oxidized [2Fe-2S]-[ferredoxin] + NADPH. This chain is Ferredoxin--NADP reductase, found in Streptococcus pyogenes serotype M3 (strain ATCC BAA-595 / MGAS315).